The chain runs to 140 residues: FAD synthase (140 aa).

Residues 9–10, 14–17, N92, and Y119 contribute to the ATP site; these read TF and HPGH.

The protein belongs to the archaeal FAD synthase family. As to quaternary structure, homodimer. It depends on a divalent metal cation as a cofactor.

It carries out the reaction FMN + ATP + H(+) = FAD + diphosphate. Its pathway is cofactor biosynthesis; FAD biosynthesis; FAD from FMN: step 1/1. In terms of biological role, catalyzes the transfer of the AMP portion of ATP to flavin mononucleotide (FMN) to produce flavin adenine dinucleotide (FAD) coenzyme. In Methanocorpusculum labreanum (strain ATCC 43576 / DSM 4855 / Z), this protein is FAD synthase.